The chain runs to 233 residues: Large ribosomal subunit protein uL1 (233 aa).

Belongs to the universal ribosomal protein uL1 family. As to quaternary structure, part of the 50S ribosomal subunit.

Binds directly to 23S rRNA. The L1 stalk is quite mobile in the ribosome, and is involved in E site tRNA release. Its function is as follows. Protein L1 is also a translational repressor protein, it controls the translation of the L11 operon by binding to its mRNA. In Pseudoalteromonas atlantica (strain T6c / ATCC BAA-1087), this protein is Large ribosomal subunit protein uL1.